We begin with the raw amino-acid sequence, 357 residues long: cAMP-responsive element modulator (357 aa).

Residues 101-160 (TVQVATIAETDDSADSEVIDSHKRREILSRRPSYRKILNELSSDVPGIPKIEEEKSEEEG) form the KID domain. Phosphoserine occurs at positions 116, 142, 284, 287, and 290. The bZIP domain maps to 299 to 357 (TRKRELRLMKNREAAKECRRRKKEYVKCLESRVAVLEVQNKKLIEELETLKDICSPKTD). Residues 300–325 (RKRELRLMKNREAAKECRRRKKEYVK) form a basic motif region. The tract at residues 327-348 (LESRVAVLEVQNKKLIEELETL) is leucine-zipper.

It belongs to the bZIP family. Binds DNA as a dimer. Interacts with CDC34. Interacts with FHL5. Isoform delta forms a heterodimer with CREB3L4. May interact with TSSK4. Post-translationally, stimulated by phosphorylation. Phosphorylated on Ser-116 by TSSK4 in vitro. Ubiquitinated by CDC34 and RAD6B in order to be degraded by the proteasome. In terms of tissue distribution, isoform Tau is expressed in testis germ cells. CREM-theta1- and CREM-theta2-containing isoforms are expressed in testis.

The protein localises to the nucleus. Functionally, transcriptional regulator that binds the cAMP response element (CRE), a sequence present in many viral and cellular promoters. Isoforms are either transcriptional activators or repressors. Isoform Delta is an activator. Plays a role in spermatogenesis and is involved in spermatid maturation. Binding of isoform Tau (activator) to CRE is increased by CREB3L4. The CREM isoform Tau-CREB3L4 heterodimer functions through CRE and may recruit HIRA to CRE to regulate histone exchange. This chain is cAMP-responsive element modulator (Crem), found in Rattus norvegicus (Rat).